The following is a 274-amino-acid chain: Adenosylcobinamide-GDP ribazoletransferase (274 aa).

7 helical membrane passes run 46–66 (VMAS…AIAF), 69–89 (TSLG…WELF), 117–137 (IIAD…SILI), 151–173 (WWMV…HSRL), 192–212 (HTII…PLAM), 216–236 (ELIT…LVEI), and 253–273 (FIMH…VGIV).

The protein belongs to the CobS family. Requires Mg(2+) as cofactor.

It is found in the cell membrane. The catalysed reaction is alpha-ribazole + adenosylcob(III)inamide-GDP = adenosylcob(III)alamin + GMP + H(+). It carries out the reaction alpha-ribazole 5'-phosphate + adenosylcob(III)inamide-GDP = adenosylcob(III)alamin 5'-phosphate + GMP + H(+). It functions in the pathway cofactor biosynthesis; adenosylcobalamin biosynthesis; adenosylcobalamin from cob(II)yrinate a,c-diamide: step 7/7. Joins adenosylcobinamide-GDP and alpha-ribazole to generate adenosylcobalamin (Ado-cobalamin). Also synthesizes adenosylcobalamin 5'-phosphate from adenosylcobinamide-GDP and alpha-ribazole 5'-phosphate. The sequence is that of Adenosylcobinamide-GDP ribazoletransferase from Corynebacterium diphtheriae (strain ATCC 700971 / NCTC 13129 / Biotype gravis).